The primary structure comprises 110 residues: Large ribosomal subunit protein uL22 (110 aa).

It belongs to the universal ribosomal protein uL22 family. Part of the 50S ribosomal subunit.

This protein binds specifically to 23S rRNA; its binding is stimulated by other ribosomal proteins, e.g. L4, L17, and L20. It is important during the early stages of 50S assembly. It makes multiple contacts with different domains of the 23S rRNA in the assembled 50S subunit and ribosome. In terms of biological role, the globular domain of the protein is located near the polypeptide exit tunnel on the outside of the subunit, while an extended beta-hairpin is found that lines the wall of the exit tunnel in the center of the 70S ribosome. This is Large ribosomal subunit protein uL22 from Janthinobacterium sp. (strain Marseille) (Minibacterium massiliensis).